The chain runs to 723 residues: Polyribonucleotide nucleotidyltransferase (723 aa).

Mg(2+) is bound by residues Asp488 and Asp494. Residues 555–614 form the KH domain; sequence PKIITLNIKPEKIKDVIGPGGKQINAIIDETGVKIDIEQDGTVYIASQDQAMNRKAIAII. Positions 624–692 constitute an S1 motif domain; the sequence is GEVYTGKVRR…QQGRVNLSRK (69 aa). Residues 692-723 form a disordered region; it reads KALLEKKEQPEGDKKPQAEKKFYPKTKKPESK. Basic and acidic residues predominate over residues 693–723; that stretch reads ALLEKKEQPEGDKKPQAEKKFYPKTKKPESK.

The protein belongs to the polyribonucleotide nucleotidyltransferase family. Requires Mg(2+) as cofactor.

It localises to the cytoplasm. It catalyses the reaction RNA(n+1) + phosphate = RNA(n) + a ribonucleoside 5'-diphosphate. Its function is as follows. Involved in mRNA degradation. Catalyzes the phosphorolysis of single-stranded polyribonucleotides processively in the 3'- to 5'-direction. The protein is Polyribonucleotide nucleotidyltransferase of Listeria monocytogenes serotype 4a (strain HCC23).